The primary structure comprises 89 residues: Probable monothiol glutaredoxin GrlA (89 aa).

The region spanning 1–89 is the Glutaredoxin domain; that stretch reads MLYMKGTPKM…EPMLRDAVAA (89 aa). Lysine 5 serves as a coordination point for glutathione. Position 13 (cysteine 13) interacts with [2Fe-2S] cluster. Glutathione contacts are provided by residues arginine 42, phenylalanine 54, and 67 to 68; that span reads SD.

It belongs to the glutaredoxin family. Monothiol subfamily.

This chain is Probable monothiol glutaredoxin GrlA (grlA), found in Legionella pneumophila subsp. pneumophila (strain Philadelphia 1 / ATCC 33152 / DSM 7513).